Consider the following 489-residue polypeptide: Dipeptide and tripeptide permease B (489 aa).

The Cytoplasmic portion of the chain corresponds to M1–R27. The helical transmembrane segment at F28 to S48 threads the bilayer. Topologically, residues Q49–A52 are periplasmic. A helical transmembrane segment spans residues F53–V73. Residues G74–R82 are Cytoplasmic-facing. Residues T83 to L103 traverse the membrane as a helical segment. The Periplasmic segment spans residues K104 to D106. Residues L107–A127 form a helical membrane-spanning segment. The Cytoplasmic portion of the chain corresponds to S128–T146. The chain crosses the membrane as a helical span at residues L147–A167. Residues D168–Y172 are Periplasmic-facing. Residues S173–C193 traverse the membrane as a helical segment. The Cytoplasmic portion of the chain corresponds to R194 to S210. The helical transmembrane segment at F211 to L231 threads the bilayer. Residues M232–H233 lie on the Periplasmic side of the membrane. The helical transmembrane segment at N234–F254 threads the bilayer. Residues R255–K267 lie on the Cytoplasmic side of the membrane. A helical transmembrane segment spans residues M268–M288. The Periplasmic segment spans residues P289–P311. Residues V312–I332 traverse the membrane as a helical segment. The Cytoplasmic portion of the chain corresponds to Y333–T350. A helical transmembrane segment spans residues L351–A371. Residues D372–W380 are Periplasmic-facing. A helical membrane pass occupies residues F381 to L401. The Cytoplasmic portion of the chain corresponds to A402–H411. Residues L412–G432 traverse the membrane as a helical segment. Over Y433–N456 the chain is Periplasmic. Residues V457 to P477 form a helical membrane-spanning segment. Over W478–H489 the chain is Cytoplasmic.

It belongs to the major facilitator superfamily. Proton-dependent oligopeptide transporter (POT/PTR) (TC 2.A.17) family. DtpB subfamily.

The protein localises to the cell inner membrane. In terms of biological role, proton-dependent permease that transports di- and tripeptides. This Shigella dysenteriae serotype 1 (strain Sd197) protein is Dipeptide and tripeptide permease B.